A 294-amino-acid polypeptide reads, in one-letter code: N-acetylmuramic acid 6-phosphate etherase (294 aa).

An SIS domain is found at 54 to 217 (VIQSFEEEGR…STASMIGVGK (164 aa)). Residue E82 is the Proton donor of the active site. The active site involves E113.

The protein belongs to the GCKR-like family. MurNAc-6-P etherase subfamily. Homodimer.

The enzyme catalyses N-acetyl-D-muramate 6-phosphate + H2O = N-acetyl-D-glucosamine 6-phosphate + (R)-lactate. The protein operates within amino-sugar metabolism; N-acetylmuramate degradation. Functionally, specifically catalyzes the cleavage of the D-lactyl ether substituent of MurNAc 6-phosphate, producing GlcNAc 6-phosphate and D-lactate. The protein is N-acetylmuramic acid 6-phosphate etherase of Bacillus cereus (strain 03BB102).